The primary structure comprises 1395 residues: MKDIFNFFEKPKDPLSFSAIRISLASPDKIRQWSHGEVKKPETINYRTFKPERDGLFCAKIFGPVKDYECNCGKYKRMKHRGVVCEKCGVEVIQSKVRRERLGHITLATPVAHIWFLKSLPSRIGNLLDITLKDLEKVLYCESYIVIDPKETTLQRGELLSEDRYHKSMEEFGEEAFLAGMGGEAVLELLKVVGPADKGHGEGVHGLADELRAQMKEATSDAKRKKIAKRLKVVEAFVQSGNKPDWMMLEVIPVIPPDLRPLVPLDGGRFATSDLNDLYRRVINRNNRLKRLQELNAPDIIIRNEKRMLQEAVDALFDNGRRGKTITGPNKRPLKSLSDMLKGKQGRFRQNLLGKRVDYSGRSVIVVGPELKLHQCGLPKIMALELFKPFIYNKLEEKGYVTTIKSAKKMVEKERPEVWDILDEVIREHPVLLNRAPTLHRLGIQAFEPVLIEGKAIQLHPLVCTAFNADFDGDQMAVHVPLSIEAQMEARVLMMSTNNILSPAHGKPIIVPSQDIVLGIYYMTRERAFARGEGKVFASEEEVRAAYDQGEVDLQAKIWVRLDGKRVETTVGRVLLYDIVPKRLPFESINKVMDKKQLQNLIDLTYRLCGEKETVLLADRVRSMGYGNATRAGISIALENMIIPRKKQELLERAMGEVDDIQTQYTEGLITIGERYNKVIDIWAQVTEEVAQEMMSQIGQETAIGTGKDGKREERKQPSFNPIYIMADSGARGSAQQIRQLAGMRGLMAKPSGEIIETPITANFREGLNVLQYFISTHGARKGLADTALKTANSGYLTRRLVDVAQDAIITEYDCGAMDGITLGALVEGGEIIEPMGERILGRVALDDIHDPFASSVLVKANEEIDESKVKLIENAGIDKVKIRSVLTCQARRGICVECYGRDLARGRKVNIGEAVGVIAAQSIGEPGTQLTMRTFHIGGAASRRAEQSTIENRNPGLVKFHNVAVAKKKDGTLIVMNRNGEIIVTDDQGRERERYGVVYGAKLLVRDGQKIETSTLLAEWDPYSMPIITEVAGHVKYGDLVDGVTISEQVDEITGLARKAVIASKDPDARPRISIKDDQGKTRKLANSEADARYMLPEGANLVVNDGDEVDAGDVIAKMPRETTKTKDITGGLPRVAELFEARKPKEHAVISEIDGVVAFGKDTKGKRKVVITPEVDGKLRPDLAKEYLIGKGKHISVHTGDRVRAGEALMDGAANPHDILRVLGEKELARWLVDEVQEVYRLQGVKINDKHIETIVRQMLRRVRIVDVGDTNFLADEQVEKFVFEEENDKVITAGGRPAQGEPLLLGITKASLSTESFISASSFQETTKVLTEAAISGKVDHLRGLKENVIMGRLIPAGTGLPHYKHLDIEVETPVDAVEEAEEALAVASGEE.

Positions 70, 72, 85, and 88 each coordinate Zn(2+). Mg(2+) contacts are provided by D470, D472, and D474. Residues C815, C889, C896, and C899 each coordinate Zn(2+).

The protein belongs to the RNA polymerase beta' chain family. The RNAP catalytic core consists of 2 alpha, 1 beta, 1 beta' and 1 omega subunit. When a sigma factor is associated with the core the holoenzyme is formed, which can initiate transcription. It depends on Mg(2+) as a cofactor. The cofactor is Zn(2+).

It carries out the reaction RNA(n) + a ribonucleoside 5'-triphosphate = RNA(n+1) + diphosphate. DNA-dependent RNA polymerase catalyzes the transcription of DNA into RNA using the four ribonucleoside triphosphates as substrates. The chain is DNA-directed RNA polymerase subunit beta' from Anaeromyxobacter sp. (strain Fw109-5).